A 348-amino-acid polypeptide reads, in one-letter code: Phosphoribosylformylglycinamidine cyclo-ligase (348 aa).

It belongs to the AIR synthase family.

The protein resides in the cytoplasm. The enzyme catalyses 2-formamido-N(1)-(5-O-phospho-beta-D-ribosyl)acetamidine + ATP = 5-amino-1-(5-phospho-beta-D-ribosyl)imidazole + ADP + phosphate + H(+). It participates in purine metabolism; IMP biosynthesis via de novo pathway; 5-amino-1-(5-phospho-D-ribosyl)imidazole from N(2)-formyl-N(1)-(5-phospho-D-ribosyl)glycinamide: step 2/2. This chain is Phosphoribosylformylglycinamidine cyclo-ligase, found in Roseobacter denitrificans (strain ATCC 33942 / OCh 114) (Erythrobacter sp. (strain OCh 114)).